Consider the following 414-residue polypeptide: 3-ketoacyl-CoA thiolase, peroxisomal (414 aa).

The N-terminal 9 residues, 1 to 9 (MDRLNNLAT), are a transit peptide targeting the peroxisome. The interval 1-9 (MDRLNNLAT) is PTS2-type peroxisomal targeting signal. Catalysis depends on C115, which acts as the Acyl-thioester intermediate. Residues H370 and C400 each act as proton acceptor in the active site.

Belongs to the thiolase-like superfamily. Thiolase family. In terms of assembly, homodimer. Interacts (via PTS2-type peroxisomal targeting signal region) with PEX7; leading to its translocation into peroxisomes.

Its subcellular location is the peroxisome. The enzyme catalyses an acyl-CoA + acetyl-CoA = a 3-oxoacyl-CoA + CoA. It functions in the pathway lipid metabolism; fatty acid metabolism. Its function is as follows. Responsible for the thiolytic cleavage of straight chain 3-keto fatty acyl-CoAs (3-oxoacyl-CoAs). This chain is 3-ketoacyl-CoA thiolase, peroxisomal (POT1), found in Yarrowia lipolytica (strain CLIB 122 / E 150) (Yeast).